Consider the following 180-residue polypeptide: ATP-dependent protease subunit HslV (180 aa).

Residue T9 is part of the active site. Na(+) is bound by residues A164, C167, and T170.

Belongs to the peptidase T1B family. HslV subfamily. A double ring-shaped homohexamer of HslV is capped on each side by a ring-shaped HslU homohexamer. The assembly of the HslU/HslV complex is dependent on binding of ATP.

The protein resides in the cytoplasm. The catalysed reaction is ATP-dependent cleavage of peptide bonds with broad specificity.. Its activity is regulated as follows. Allosterically activated by HslU binding. In terms of biological role, protease subunit of a proteasome-like degradation complex believed to be a general protein degrading machinery. In Leptospira interrogans serogroup Icterohaemorrhagiae serovar Lai (strain 56601), this protein is ATP-dependent protease subunit HslV.